Here is a 609-residue protein sequence, read N- to C-terminus: Glutamine--fructose-6-phosphate aminotransferase [isomerizing] (609 aa).

Cys-2 functions as the Nucleophile; for GATase activity in the catalytic mechanism. The 217-residue stretch at 2-218 folds into the Glutamine amidotransferase type-2 domain; the sequence is CGIVGAVAQR…EGDVVEVTRR (217 aa). SIS domains lie at 286-426 and 458-599; these read ADAL…LKGA and LAEG…VDQP. The active-site For Fru-6P isomerization activity is Lys-604.

Homodimer.

It is found in the cytoplasm. The catalysed reaction is D-fructose 6-phosphate + L-glutamine = D-glucosamine 6-phosphate + L-glutamate. Functionally, catalyzes the first step in hexosamine metabolism, converting fructose-6P into glucosamine-6P using glutamine as a nitrogen source. The chain is Glutamine--fructose-6-phosphate aminotransferase [isomerizing] from Yersinia pestis.